The primary structure comprises 191 residues: MKTLLKSIKITLVFCVFFSVFYILVLWLFAQVAGPNRGNAEVVTLNGKVVGAANVGQTFTEEKYFWGRPSCAGDGYDATSSAGSNKGPTNPEYLAEVEARIDTFLIHHPYLARKDVPAEMVTASASGLDPDITPQSAYVQVKRVAQARGMDVEEVRRVVDKAVEKPLLGIFGTEKVNVLKLNIALEELKNR.

A helical transmembrane segment spans residues 10–30; that stretch reads ITLVFCVFFSVFYILVLWLFA.

It belongs to the KdpC family. As to quaternary structure, the system is composed of three essential subunits: KdpA, KdpB and KdpC.

Its subcellular location is the cell inner membrane. Functionally, part of the high-affinity ATP-driven potassium transport (or Kdp) system, which catalyzes the hydrolysis of ATP coupled with the electrogenic transport of potassium into the cytoplasm. This subunit acts as a catalytic chaperone that increases the ATP-binding affinity of the ATP-hydrolyzing subunit KdpB by the formation of a transient KdpB/KdpC/ATP ternary complex. The polypeptide is Potassium-transporting ATPase KdpC subunit (Bacteroides fragilis (strain YCH46)).